The following is a 235-amino-acid chain: Peptidase E (235 aa).

Active-site charge relay system residues include Ser-122, Asp-137, and His-159.

This sequence belongs to the peptidase S51 family.

The protein resides in the cytoplasm. It catalyses the reaction Dipeptidase E catalyzes the hydrolysis of dipeptides Asp-|-Xaa. It does not act on peptides with N-terminal Glu, Asn or Gln, nor does it cleave isoaspartyl peptides.. In terms of biological role, hydrolyzes dipeptides containing N-terminal aspartate residues. May play a role in allowing the cell to use peptide aspartate to spare carbon otherwise required for the synthesis of the aspartate family of amino acids. This is Peptidase E from Shewanella denitrificans (strain OS217 / ATCC BAA-1090 / DSM 15013).